Consider the following 208-residue polypeptide: RxLR effector protein Avr1 (208 aa).

The N-terminal stretch at M1 to A22 is a signal peptide. Residues R41–R54 carry the RxLR-dEER motif. The interval K70 to R92 is W1-motif. The interval L93–F110 is linker region ln1. Positions K111 to F136 are W2-motif. Residues D137–K157 are Y-motif. The tract at residues K158–L170 is linker region ln2. Residues L170–F208 form a T-region region.

This sequence belongs to the RxLR effector family. As to quaternary structure, interacts with host exocyst component Sec5.

The protein resides in the secreted. It is found in the host cytoplasm. The protein localises to the host nucleus. It localises to the host peroxisome. Functionally, secreted effector that acts as an elicitor of hypersensitive response (HR) specifically on plants carrying defense protein R1, through its interaction with this protein. Also acts as a virulence factor that promotes colonization and suppresses cell death induced by CRN2 as well as callose deposition, a hallmark of basal defense. Interacts with host exocyst component Sec5 and thereby disturbs vesicle trafficking, a cellular process that is important for basal defense. By targeting and stabilizing Sec5 in the cytoplasm, the exocyst complex is thus out of balance and not able to mediate the focal secretion of PR-1 and callose. This is RxLR effector protein Avr1 from Phytophthora infestans (strain T30-4) (Potato late blight agent).